The following is a 290-amino-acid chain: Phosphatidylglycerol--prolipoprotein diacylglyceryl transferase (290 aa).

7 helical membrane passes run 21 to 41 (VSLH…MWLA), 60 to 80 (LLYA…VLFY), 98 to 118 (GGMS…WFAH), 124 to 144 (FFQV…AGRL), 198 to 218 (SQLY…NLFI), 224 to 244 (IGSV…LVEF), and 258 to 278 (VISM…IMMA). Arg-143 provides a ligand contact to a 1,2-diacyl-sn-glycero-3-phospho-(1'-sn-glycerol).

This sequence belongs to the Lgt family.

The protein resides in the cell inner membrane. It catalyses the reaction L-cysteinyl-[prolipoprotein] + a 1,2-diacyl-sn-glycero-3-phospho-(1'-sn-glycerol) = an S-1,2-diacyl-sn-glyceryl-L-cysteinyl-[prolipoprotein] + sn-glycerol 1-phosphate + H(+). It participates in protein modification; lipoprotein biosynthesis (diacylglyceryl transfer). Catalyzes the transfer of the diacylglyceryl group from phosphatidylglycerol to the sulfhydryl group of the N-terminal cysteine of a prolipoprotein, the first step in the formation of mature lipoproteins. This is Phosphatidylglycerol--prolipoprotein diacylglyceryl transferase from Sodalis glossinidius (strain morsitans).